The chain runs to 109 residues: uncharacterized protein (109 aa).

This is an uncharacterized protein from Treponema pallidum (strain Nichols).